Here is a 522-residue protein sequence, read N- to C-terminus: Maturase K (522 aa).

It belongs to the intron maturase 2 family. MatK subfamily.

The protein resides in the plastid. It is found in the chloroplast. Functionally, usually encoded in the trnK tRNA gene intron. Probably assists in splicing its own and other chloroplast group II introns. In Iris danfordiae (Danford iris), this protein is Maturase K.